The primary structure comprises 534 residues: Corneodesmosin (534 aa).

The N-terminal stretch at 1–32 (MGLSRAPWMGRVGGRGMMALLLAGLLLPGTLA) is a signal peptide. Disordered stretches follow at residues 38–252 (FSDP…HSVS) and 396–497 (CSPF…GSAG). Composition is skewed to low complexity over residues 64 to 82 (GFSSYSGSSGSGSSISSAS), 107 to 185 (GYSQ…SGSA), 200 to 236 (SQLGQSSSFSQTSGQRVSSNQRPCSSDIPDSPCSGGP), 397 to 415 (SPFSSRVHSSSSISSSSGS), and 431 to 446 (PGTGSFSSSSSSQSSG). Positions 454-472 (GSKSSSSGHPCMSVSSLTL) are enriched in polar residues.

The protein localises to the secreted. Functionally, important for the epidermal barrier integrity. The protein is Corneodesmosin (CDSN) of Macaca mulatta (Rhesus macaque).